The sequence spans 238 residues: Type III secretion protein hrcQa (238 aa).

Residues 66–238 (DAEALLSLLG…SHEEHSHHEY (173 aa)) are hrcQa-C.

Interacts with hrcQb.

Its subcellular location is the cell inner membrane. Component of the type III secretion system, which is required for effector protein delivery, parasitism, and pathogenicity. Probably participates in the formation of a C-ring-like assembly along with hrcQb. The protein is Type III secretion protein hrcQa (hrcQa) of Pseudomonas syringae pv. syringae.